We begin with the raw amino-acid sequence, 146 residues long: VHLSGEEKAAVTGLWGKVDLEKVGGQSLGSLLIVYPWTQRFFDSFGDLSSPSAVMSNPKVKAHGKKVLTSFSDGLNHLDNLKGTFAKLSELHCDKLHVDPENFRLLGNVLVRVLACNFGPEFTPQVQAAFQKVVAGVANALAHKYH.

Val1 is subject to N-acetylvaline. The Globin domain maps to 2-146 (HLSGEEKAAV…VANALAHKYH (145 aa)). A Phosphothreonine modification is found at Thr12. Residue Ser44 is modified to Phosphoserine. Lys59 is modified (N6-acetyllysine). Residue His63 participates in heme b binding. Residue Lys82 is modified to N6-acetyllysine. Residue His92 coordinates heme b. Cys93 is subject to S-nitrosocysteine. Lys144 bears the N6-acetyllysine mark.

Belongs to the globin family. In terms of assembly, heterotetramer of two alpha chains and two beta chains. Red blood cells.

Functionally, involved in oxygen transport from the lung to the various peripheral tissues. The chain is Hemoglobin subunit beta (HBB) from Tupaia glis (Common tree shrew).